A 668-amino-acid polypeptide reads, in one-letter code: RNA-binding protein PIN4 (668 aa).

The interval 1-77 (METSSFENAP…NLNNAPTNGA (77 aa)) is disordered. Low complexity predominate over residues 8–23 (NAPPAAINDAQDNNIN). Residues 24-36 (TETNDQETNQQSI) show a composition bias toward polar residues. Over residues 37–46 (ETRDAIDKEN) the composition is skewed to basic and acidic residues. Positions 47-74 (GVQTETGENSAKNAEQNVSSTNLNNAPT) are enriched in polar residues. S56 carries the post-translational modification Phosphoserine. Positions 85-163 (NAIVIKNIPF…RKLKVEYKKM (79 aa)) constitute an RRM domain. Residues 168 to 188 (ERERIEREKREKRGQLEEQHR) show a composition bias toward basic and acidic residues. The tract at residues 168–214 (ERERIEREKREKRGQLEEQHRSSSNLSLDSLSKMSGSGNNNTSNNQL) is disordered. A phosphoserine mark is found at S189, S191, S194, and S197. The span at 189–212 (SSSNLSLDSLSKMSGSGNNNTSNN) shows a compositional bias: low complexity. The residue at position 305 (T305) is a Phosphothreonine. Disordered stretches follow at residues 374-398 (QQQG…NRSQ) and 420-570 (VNNS…QRVP). S393 is modified (phosphoserine). The segment covering 420 to 449 (VNNSSNSNTINSNNGNGNNVIINNNSASST) has biased composition (low complexity). Positions 450–478 (PKISSQGQFSMQPTLTSPKMNIHHSSQYN) are enriched in polar residues. S466 carries the post-translational modification Phosphoserine. A compositionally biased stretch (low complexity) spans 479 to 508 (SADQPQQPQPQTQQNVQSAAQQQQSFLRQQ). Positions 509 to 551 (ATLTPSSRIPSGYSANHYQINSVNPLLRNSQISPPNSQIPINS) are enriched in polar residues. S541 carries the post-translational modification Phosphoserine. Residues 552–567 (QTLSQAQPPAQSQTQQ) are compositionally biased toward low complexity. Residues S636, S638, S640, S653, and S655 each carry the phosphoserine modification.

In terms of assembly, interacts with RAD53. In terms of processing, hyperphosphorylated in response to DNA damage by MEC1.

The protein localises to the cytoplasm. Its function is as follows. Involved in normal G2/M phase transition of the mitotic cell cycle. In association with RAD53, also involved in checkpoint control in response to DNA damage. This chain is RNA-binding protein PIN4 (PIN4), found in Saccharomyces cerevisiae (strain ATCC 204508 / S288c) (Baker's yeast).